The sequence spans 344 residues: Phosphate acyltransferase (344 aa).

It belongs to the PlsX family. As to quaternary structure, homodimer. Probably interacts with PlsY.

The protein localises to the cytoplasm. It catalyses the reaction a fatty acyl-[ACP] + phosphate = an acyl phosphate + holo-[ACP]. Its pathway is lipid metabolism; phospholipid metabolism. Its function is as follows. Catalyzes the reversible formation of acyl-phosphate (acyl-PO(4)) from acyl-[acyl-carrier-protein] (acyl-ACP). This enzyme utilizes acyl-ACP as fatty acyl donor, but not acyl-CoA. This chain is Phosphate acyltransferase, found in Thermosynechococcus vestitus (strain NIES-2133 / IAM M-273 / BP-1).